The chain runs to 312 residues: MIFDGFIKNLIYDPVSTLGILIFYFLLINLPISLLALFNKKSSSFVRFFTILINLFIALQLIFRWILSGHFPISNLYESLYFLVWGISLGQLLVEKEYPNPIIPVIAIPIELLTIAFACFVLPDDLKLSSNLVPALRSSWLIMHVSVVMLSYAALIIGSLLSASVLFINNRQPLQLRSSSTGIGGFRMSNEYSGNNFNEPINFTHTEELDTLSYRSILVGFVLLTLGLITGAIWANEAWGTWWSWDPKETWAFISWLFYAAYLHMRISRGWQGRRPALFATSGFFVVLICYLGVNFLGIGLHSYGWIFGILN.

8 helical membrane-spanning segments follow: residues 18–38, 48–68, 73–93, 102–122, 148–168, 216–236, 250–267, and 279–299; these read LGIL…LALF, FFTI…WILS, ISNL…GQLL, IIPV…CFVL, VMLS…VLFI, SILV…IWAN, TWAF…HMRI, and FATS…FLGI.

The protein belongs to the CcmF/CycK/Ccl1/NrfE/CcsA family. May interact with ccs1.

The protein resides in the cellular thylakoid membrane. In terms of biological role, required during biogenesis of c-type cytochromes (cytochrome c6 and cytochrome f) at the step of heme attachment. The polypeptide is Cytochrome c biogenesis protein CcsA (Prochlorococcus marinus (strain MIT 9515)).